The chain runs to 253 residues: 3-dehydroquinate dehydratase (253 aa).

3-dehydroquinate contacts are provided by residues 46–48 (EWR) and arginine 82. Residue histidine 143 is the Proton donor/acceptor of the active site. The active-site Schiff-base intermediate with substrate is the lysine 170. 3-dehydroquinate contacts are provided by arginine 213, serine 232, and glutamine 236.

The protein belongs to the type-I 3-dehydroquinase family. As to quaternary structure, homodimer.

It catalyses the reaction 3-dehydroquinate = 3-dehydroshikimate + H2O. The protein operates within metabolic intermediate biosynthesis; chorismate biosynthesis; chorismate from D-erythrose 4-phosphate and phosphoenolpyruvate: step 3/7. With respect to regulation, inhibited by flavonoids such as datiscetin, naringenin, marein and phloretin. Functionally, involved in the third step of the chorismate pathway, which leads to the biosynthesis of aromatic amino acids (AroAA). Catalyzes the cis-dehydration of 3-dehydroquinate (DHQ) and introduces the first double bond of the aromatic ring to yield 3-dehydroshikimate. The reaction involves the formation of an imine intermediate between the keto group of 3-dehydroquinate and the epsilon-amino group of Lys-170 at the active site. This Enterococcus faecalis (strain ATCC 700802 / V583) protein is 3-dehydroquinate dehydratase.